Reading from the N-terminus, the 236-residue chain is Phosphoribosylaminoimidazole-succinocarboxamide synthase (236 aa).

Belongs to the SAICAR synthetase family.

It catalyses the reaction 5-amino-1-(5-phospho-D-ribosyl)imidazole-4-carboxylate + L-aspartate + ATP = (2S)-2-[5-amino-1-(5-phospho-beta-D-ribosyl)imidazole-4-carboxamido]succinate + ADP + phosphate + 2 H(+). It functions in the pathway purine metabolism; IMP biosynthesis via de novo pathway; 5-amino-1-(5-phospho-D-ribosyl)imidazole-4-carboxamide from 5-amino-1-(5-phospho-D-ribosyl)imidazole-4-carboxylate: step 1/2. In Pseudomonas savastanoi pv. phaseolicola (strain 1448A / Race 6) (Pseudomonas syringae pv. phaseolicola (strain 1448A / Race 6)), this protein is Phosphoribosylaminoimidazole-succinocarboxamide synthase.